Consider the following 271-residue polypeptide: Glutamate racemase (271 aa).

Substrate is bound by residues 12–13 and 44–45; these read DS and YG. The active-site Proton donor/acceptor is the Cys-75. Residue 76–77 coordinates substrate; that stretch reads NT. The Proton donor/acceptor role is filled by Cys-185. 186 to 187 provides a ligand contact to substrate; the sequence is TH.

The protein belongs to the aspartate/glutamate racemases family.

It carries out the reaction L-glutamate = D-glutamate. Its pathway is cell wall biogenesis; peptidoglycan biosynthesis. Functionally, provides the (R)-glutamate required for cell wall biosynthesis. This is Glutamate racemase from Mycobacterium marinum (strain ATCC BAA-535 / M).